Here is a 206-residue protein sequence, read N- to C-terminus: Large ribosomal subunit protein uL4 (206 aa).

The interval 47–75 is disordered; it reads GTQSAKTRAEVSGGGIKPWRQKGTGRARQ.

The protein belongs to the universal ribosomal protein uL4 family. In terms of assembly, part of the 50S ribosomal subunit.

One of the primary rRNA binding proteins, this protein initially binds near the 5'-end of the 23S rRNA. It is important during the early stages of 50S assembly. It makes multiple contacts with different domains of the 23S rRNA in the assembled 50S subunit and ribosome. Its function is as follows. Forms part of the polypeptide exit tunnel. In Clostridium botulinum (strain ATCC 19397 / Type A), this protein is Large ribosomal subunit protein uL4.